A 1534-amino-acid chain; its full sequence is Slit homolog 1 protein (1534 aa).

The N-terminal stretch at 1-33 is a signal peptide; sequence MALTPGWGSSAGPVRPELWLLLWAAAWRLGASA. The region spanning 34-61 is the LRRNT domain; that stretch reads CPALCTCTGTTVDCHGTGLQAIPKNIPR. 6 LRR repeats span residues 62-83, 86-107, 110-131, 134-155, 158-179, and 182-203; these read NTER…DFAG, QLRV…AFDD, ELER…LFQN, ALSR…AFRG, DLKN…AFRA, and GLEV…SFNH. N72 carries N-linked (GlcNAc...) asparagine glycosylation. A glycan (N-linked (GlcNAc...) asparagine) is linked at N192. The region spanning 215–265 is the LRRCT 1 domain; the sequence is NHLFCDCHLAWLSQWLRQRPTIGLFTQCSGPASLRGLNVAEVQKSEFSCSG. The 37-residue stretch at 273 to 309 folds into the LRRNT 2 domain; that stretch reads PTCTLSSGSCPAMCTCSNGIVDCRGKGLTAIPANLPE. Residues C286 and C295 are joined by a disulfide bond. 5 LRR repeats span residues 310–331, 334–355, 358–379, 382–403, and 406–427; these read TMTE…AFSP, KLRR…AFQG, SLNS…VFGG, TLQL…AFQD, and NLSL…TFTS. N-linked (GlcNAc...) asparagine glycosylation occurs at N406. The region spanning 439 to 489 is the LRRCT 2 domain; the sequence is NPFICDCNLKWLADFLRTNPIETSGARCASPRRLANKRIGQIKSKKFRCSA. 4 disulfide bridges follow: C443/C466, C445/C487, C513/C519, and C517/C526. Residues 504–540 form the LRRNT 3 domain; that stretch reads NSECNSDVVCPHKCRCEANVVECSSLKLTKIPERIPQ. LRR repeat units lie at residues 541-562, 566-587, 590-611, 614-635, and 638-659; these read STAE…GMFK, HLKK…AFEG, SVSE…MFRG, GLRT…SFTG, and NVRL…AFDT. N571 carries an N-linked (GlcNAc...) asparagine glycan. N630 carries an N-linked (GlcNAc...) asparagine glycan. In terms of domain architecture, LRRCT 3 spans 671-721; it reads NPFNCNCQLAWLGGWLRKRKIVTGNPRCQNPDFLRQIPLQDVAFPDFRCEE. 2 disulfide bridges follow: C675/C698 and C677/C719. The 37-residue stretch at 725-761 folds into the LRRNT 4 domain; that stretch reads EGGCLPRPQCPQECACLDTVVRCSNKHLRALPKGIPK. N-linked (GlcNAc...) asparagine glycosylation is found at N762, N801, and N806. 4 LRR repeats span residues 762 to 783, 785 to 806, 809 to 830, and 833 to 854; these read NVTE…LSTF, YLQL…SFTN, QLTT…AFQG, and SLRL…IFAD. The LRRCT 4 domain occupies 866-916; that stretch reads NPLYCDCHLRWLSSWVKTGYKEPGIARCAGPQDMEGKLLLTTPAKKFECQG. EGF-like domains follow at residues 927 to 962, 964 to 1003, 1005 to 1041, 1043 to 1081, 1083 to 1119, and 1127 to 1163; these read DLCL…RDCE, SLDS…PTCG, NTDD…KACE, LVDL…DNCS, NQDD…QLCE, and PKSP…PECE. 18 disulfide bridges follow: C929-C940, C934-C950, C952-C961, C968-C979, C973-C991, C993-C1002, C1009-C1020, C1014-C1029, C1031-C1040, C1047-C1060, C1054-C1069, C1071-C1080, C1087-C1098, C1092-C1107, C1109-C1118, C1131-C1142, C1136-C1151, and C1153-C1162. N1026 is a glycosylation site (N-linked (GlcNAc...) asparagine). The N-linked (GlcNAc...) asparagine glycan is linked to N1079. Positions 1166 to 1339 constitute a Laminin G-like domain; sequence LSVNFVDRDT…QMKPGVVPGC (174 aa). 3 N-linked (GlcNAc...) asparagine glycosylation sites follow: N1189, N1259, and N1306. Disulfide bonds link C1313–C1339, C1342–C1352, C1347–C1362, C1364–C1373, C1381–C1391, C1386–C1401, C1403–C1412, C1422–C1432, C1427–C1442, C1444–C1453, C1459–C1498, C1477–C1512, C1488–C1528, and C1492–C1530. 3 consecutive EGF-like domains span residues 1340-1374, 1377-1413, and 1418-1454; these read EPCR…LHCD, ADGP…ALCN, and LAEP…ELCE. Positions 1459-1534 constitute a CTCK domain; the sequence is CRGDPVRDFH…PTKCGCALCA (76 aa).

In terms of assembly, interacts with ROBO1 and GREM1. As to expression, predominantly expressed in adult forebrain. Expressed in fetal brain, lung and kidney.

Its subcellular location is the secreted. Its function is as follows. Thought to act as molecular guidance cue in cellular migration, and function appears to be mediated by interaction with roundabout homolog receptors. During neural development involved in axonal navigation at the ventral midline of the neural tube and projection of axons to different regions. SLIT1 and SLIT2 together seem to be essential for midline guidance in the forebrain by acting as repulsive signal preventing inappropriate midline crossing by axons projecting from the olfactory bulb. The polypeptide is Slit homolog 1 protein (SLIT1) (Homo sapiens (Human)).